A 208-amino-acid chain; its full sequence is ATP-dependent Clp protease proteolytic subunit (208 aa).

The active-site Nucleophile is S101. The active site involves H126.

Belongs to the peptidase S14 family. In terms of assembly, component of the chloroplastic Clp protease core complex.

It localises to the plastid. The protein localises to the chloroplast stroma. It carries out the reaction Hydrolysis of proteins to small peptides in the presence of ATP and magnesium. alpha-casein is the usual test substrate. In the absence of ATP, only oligopeptides shorter than five residues are hydrolyzed (such as succinyl-Leu-Tyr-|-NHMec, and Leu-Tyr-Leu-|-Tyr-Trp, in which cleavage of the -Tyr-|-Leu- and -Tyr-|-Trp bonds also occurs).. Functionally, cleaves peptides in various proteins in a process that requires ATP hydrolysis. Has a chymotrypsin-like activity. Plays a major role in the degradation of misfolded proteins. In Nephroselmis olivacea (Green alga), this protein is ATP-dependent Clp protease proteolytic subunit.